Here is a 54-residue protein sequence, read N- to C-terminus: UPF0391 membrane protein BAV1230 (54 aa).

2 consecutive transmembrane segments (helical) span residues 5 to 25 (AAVFFVIALIAAVLGFGGIAA) and 27 to 47 (AAGIAKILFFVFLVLALLSVL).

Belongs to the UPF0391 family.

The protein resides in the cell membrane. The chain is UPF0391 membrane protein BAV1230 from Bordetella avium (strain 197N).